The primary structure comprises 358 residues: MVPAELFARVEFPDHKILAQTKDFHDSLTKPPGSLGKLEQIGCFISACQGQIPPRPLNNSKIVVFAGDHGVATKGVSAYPSSVSLQMAENITNGGAAINVIARTTGTSVRLIDTSLDHEAWGDERVSRSCGSIDVEDAMTQEQVERALKIGKRIADQEVDAGADILIPGDLGIGNTTTAAALVGTFTLAEPVVVVGRGTGIDDEAWKLKVSAIRDAMFRARDLRQDPIAIARKISSPDLAAMAAFIAQAAVRRTPVLLDGVVVTAAALLANKLAPGARRWFIAGHRSTEPAHSVALNALALDPILELGMSLGEGSGAATALPLVKIAVDLMNDMSTFSSAGVDGPLNASSEAPEQNTE.

The active-site Proton acceptor is the E313.

The protein belongs to the CobT family.

The enzyme catalyses 5,6-dimethylbenzimidazole + nicotinate beta-D-ribonucleotide = alpha-ribazole 5'-phosphate + nicotinate + H(+). The protein operates within nucleoside biosynthesis; alpha-ribazole biosynthesis; alpha-ribazole from 5,6-dimethylbenzimidazole: step 1/2. Its function is as follows. Catalyzes the synthesis of alpha-ribazole-5'-phosphate from nicotinate mononucleotide (NAMN) and 5,6-dimethylbenzimidazole (DMB). This Corynebacterium glutamicum (strain ATCC 13032 / DSM 20300 / JCM 1318 / BCRC 11384 / CCUG 27702 / LMG 3730 / NBRC 12168 / NCIMB 10025 / NRRL B-2784 / 534) protein is Nicotinate-nucleotide--dimethylbenzimidazole phosphoribosyltransferase.